The chain runs to 139 residues: MHCPLLRHTVVIEWAAPSMVGSAPMGRDSPAGMREAVYFLHRMVVCLGVLLCAASLLYVFGNFSHFLDKSQFIILRSCVGCSVLLVVACLCAGSFELYFFLTRSDAPYGRLLCITVVALLFGMGALVFNTVVLIVAKGT.

Transmembrane regions (helical) follow at residues 38–60, 72–94, and 114–136; these read YFLH…LYVF, FIIL…CAGS, and ITVV…LIVA.

The protein resides in the cell membrane. This is an uncharacterized protein from Treponema pallidum (strain Nichols).